Consider the following 103-residue polypeptide: Small ribosomal subunit protein uS10 (103 aa).

The protein belongs to the universal ribosomal protein uS10 family. As to quaternary structure, part of the 30S ribosomal subunit.

Its function is as follows. Involved in the binding of tRNA to the ribosomes. The polypeptide is Small ribosomal subunit protein uS10 (Helicobacter hepaticus (strain ATCC 51449 / 3B1)).